We begin with the raw amino-acid sequence, 328 residues long: AA9 family lytic polysaccharide monooxygenase A (328 aa).

An N-terminal signal peptide occupies residues 1-21 (MPSTKVAALSAVLALASTVAG). A Cu(2+)-binding site is contributed by His22. His22 is subject to Methylhistidine. 2 disulfide bridges follow: Cys77–Cys199 and Cys118–Cys122. Asn80 carries an N-linked (GlcNAc...) asparagine glycan. Residue His107 coordinates Cu(2+). Asn121 and Asn159 each carry an N-linked (GlcNAc...) asparagine glycan. O2-binding residues include His185 and Gln194. Cu(2+) is bound at residue Tyr196. Ser235 and Ser237 each carry an O-linked (Man...) serine glycan. Residues Thr238 and Thr245 are each glycosylated (O-linked (Man...) threonine).

It belongs to the polysaccharide monooxygenase AA9 family. Requires Cu(2+) as cofactor. In terms of processing, the catalytically essential N-terminal histidine His-22 is post-translationally modified by methylation to prevent protonation of the histidine side chain, and protect the critical active site of the enzyme from oxidative damage.

It localises to the secreted. The catalysed reaction is [(1-&gt;4)-beta-D-glucosyl]n+m + reduced acceptor + O2 = 4-dehydro-beta-D-glucosyl-[(1-&gt;4)-beta-D-glucosyl]n-1 + [(1-&gt;4)-beta-D-glucosyl]m + acceptor + H2O.. Its function is as follows. Lytic polysaccharide monooxygenase (LPMO) that depolymerizes crystalline and amorphous polysaccharides via the oxidation of scissile alpha- or beta-(1-4)-glycosidic bonds, yielding C1 and C4 oxidation products. Catalysis by LPMOs requires the reduction of the active-site copper from Cu(II) to Cu(I) by a reducing agent and H(2)O(2) or O(2) as a cosubstrate. Shows activity on cellulosic substrates (Avicel, carboxymethylcellulose) and xylan. This chain is AA9 family lytic polysaccharide monooxygenase A, found in Talaromyces verruculosus (Penicillium verruculosum).